The sequence spans 188 residues: dCTP deaminase (188 aa).

DCTP is bound by residues Lys-111–Arg-116, Thr-135–Glu-137, Gln-156, Tyr-170, and Gln-180. Catalysis depends on Glu-137, which acts as the Proton donor/acceptor.

This sequence belongs to the dCTP deaminase family. Homotrimer.

It carries out the reaction dCTP + H2O + H(+) = dUTP + NH4(+). The protein operates within pyrimidine metabolism; dUMP biosynthesis; dUMP from dCTP (dUTP route): step 1/2. Catalyzes the deamination of dCTP to dUTP. The sequence is that of dCTP deaminase from Pseudomonas fluorescens (strain SBW25).